The following is a 349-amino-acid chain: MKEVGIVGYGSDLPKYRIKAEDIAGAWGKDAQAIKRGLIVNEKSVPGPDEDTATISVQAARRALSRAGINPKDIGAVYVGSESHPYAVKPTSGIVAEACGVSPDFTAADLEFACKAGTAGIQMCMGLVGSGMMEYAMAVGADTAQGAPGDALEYTAAAGGAAYIIGAKKEELIAKFNGTYSYTTDTPDFWRREHEHYPKHGGRFTGEPAYFKHVLNGAKGMMAKMDTTAKDYDYCVFHQPNGKFYITAAKQLGFTEEQYKYGLLTPYLGNTYSGAVPLGLSNILDHAKADDRIFVVSYGSGAGSDAFDITVTDRISEVVDKEITTEKLLESKKYVDYAVYLKYRGKIRM.

(3S)-3-hydroxy-3-methylglutaryl-CoA contacts are provided by Asp-30 and Ala-31. Residue Glu-82 is the Proton donor/acceptor of the active site. Residues Cys-114 and Thr-155 each coordinate (3S)-3-hydroxy-3-methylglutaryl-CoA. Catalysis depends on Cys-114, which acts as the Acyl-thioester intermediate. Residue Arg-203 coordinates CoA. Residues Thr-205 and His-238 each coordinate (3S)-3-hydroxy-3-methylglutaryl-CoA. The active-site Proton donor/acceptor is His-238. Position 243 (Lys-243) interacts with CoA. Asn-270 and Ser-300 together coordinate (3S)-3-hydroxy-3-methylglutaryl-CoA.

It belongs to the thiolase-like superfamily. Archaeal HMG-CoA synthase family. As to quaternary structure, interacts with acetoacetyl-CoA thiolase that catalyzes the precedent step in the pathway and with a DUF35 protein. The acetoacetyl-CoA thiolase/HMG-CoA synthase complex channels the intermediate via a fused CoA-binding site, which allows for efficient coupling of the endergonic thiolase reaction with the exergonic HMGCS reaction.

It carries out the reaction acetoacetyl-CoA + acetyl-CoA + H2O = (3S)-3-hydroxy-3-methylglutaryl-CoA + CoA + H(+). The protein operates within metabolic intermediate biosynthesis; (R)-mevalonate biosynthesis; (R)-mevalonate from acetyl-CoA: step 2/3. Functionally, catalyzes the condensation of acetyl-CoA with acetoacetyl-CoA to form 3-hydroxy-3-methylglutaryl-CoA (HMG-CoA). Functions in the mevalonate (MVA) pathway leading to isopentenyl diphosphate (IPP), a key precursor for the biosynthesis of isoprenoid compounds that are building blocks of archaeal membrane lipids. The protein is Hydroxymethylglutaryl-CoA synthase of Methanococcus maripaludis (strain C6 / ATCC BAA-1332).